Here is a 430-residue protein sequence, read N- to C-terminus: 3-phosphoshikimate 1-carboxyvinyltransferase (430 aa).

3-phosphoshikimate-binding residues include lysine 21, serine 22, and arginine 26. Lysine 21 serves as a coordination point for phosphoenolpyruvate. The phosphoenolpyruvate site is built by glycine 94 and arginine 122. Residues serine 167, glutamine 169, aspartate 317, and lysine 344 each coordinate 3-phosphoshikimate. Phosphoenolpyruvate is bound at residue glutamine 169. The active-site Proton acceptor is the aspartate 317. Phosphoenolpyruvate is bound by residues arginine 348 and arginine 390.

Belongs to the EPSP synthase family. In terms of assembly, monomer.

The protein resides in the cytoplasm. The catalysed reaction is 3-phosphoshikimate + phosphoenolpyruvate = 5-O-(1-carboxyvinyl)-3-phosphoshikimate + phosphate. It functions in the pathway metabolic intermediate biosynthesis; chorismate biosynthesis; chorismate from D-erythrose 4-phosphate and phosphoenolpyruvate: step 6/7. Its function is as follows. Catalyzes the transfer of the enolpyruvyl moiety of phosphoenolpyruvate (PEP) to the 5-hydroxyl of shikimate-3-phosphate (S3P) to produce enolpyruvyl shikimate-3-phosphate and inorganic phosphate. The chain is 3-phosphoshikimate 1-carboxyvinyltransferase from Thermodesulfovibrio yellowstonii (strain ATCC 51303 / DSM 11347 / YP87).